We begin with the raw amino-acid sequence, 492 residues long: GTPase Der (492 aa).

EngA-type G domains lie at 3–166 and 205–378; these read PVVA…VDEV and IKLA…DSAT. GTP-binding positions include 9 to 16, 56 to 60, 118 to 121, 211 to 218, 258 to 262, and 323 to 326; these read GRPNVGKS, DTGGI, NKTD, DTAGV, and NKWD. Residues 379-463 enclose the KH-like domain; the sequence is RRVSTAMLTR…PIRIQFKEGE (85 aa).

This sequence belongs to the TRAFAC class TrmE-Era-EngA-EngB-Septin-like GTPase superfamily. EngA (Der) GTPase family. In terms of assembly, associates with the 50S ribosomal subunit.

Functionally, GTPase that plays an essential role in the late steps of ribosome biogenesis. The protein is GTPase Der of Klebsiella pneumoniae subsp. pneumoniae (strain ATCC 700721 / MGH 78578).